The chain runs to 185 residues: Ribosome-recycling factor (185 aa).

Belongs to the RRF family.

Its subcellular location is the cytoplasm. Responsible for the release of ribosomes from messenger RNA at the termination of protein biosynthesis. May increase the efficiency of translation by recycling ribosomes from one round of translation to another. This is Ribosome-recycling factor from Desulfosudis oleivorans (strain DSM 6200 / JCM 39069 / Hxd3) (Desulfococcus oleovorans).